Here is a 232-residue protein sequence, read N- to C-terminus: MKNLCIIPARGGSKRIPRKNIIDFLGKPLISYSIENALNSGIFDEVVLSSDDEEIIEVALKYGAKAPFVRDKNLSDDYASSTAVVQNAIEILQSQNQIYDHVCCLYATAPLLNKDILKQAYEKFIQNQSKFLFAATEFEYPIQRAFYLNENNQVYMFDEKHYKSRSQDLTKAYHDAGAFYFGTSKAWLEEDFIFKPHSSVFVLPRNLVCDIDTIQDLEFAKILYKVNHESAF.

It belongs to the CMP-NeuNAc synthase family. Mg(2+) serves as cofactor.

It catalyses the reaction pseudaminate + CTP = CMP-pseudaminate + diphosphate. Its function is as follows. Catalyzes the final step in the biosynthesis of pseudaminic acid, a sialic-acid-like sugar that is used to modify flagellin. Mediates the activation of pseudaminic acid with CMP by forming CMP-pseudaminic acid. The sequence is that of Pseudaminic acid cytidylyltransferase (pseF) from Campylobacter jejuni subsp. jejuni serotype O:2 (strain ATCC 700819 / NCTC 11168).